We begin with the raw amino-acid sequence, 414 residues long: Esterase FrsA (414 aa).

It belongs to the FrsA family.

The enzyme catalyses a carboxylic ester + H2O = an alcohol + a carboxylate + H(+). Catalyzes the hydrolysis of esters. This chain is Esterase FrsA, found in Shigella boydii serotype 4 (strain Sb227).